A 438-amino-acid polypeptide reads, in one-letter code: Trigger factor (438 aa).

One can recognise a PPIase FKBP-type domain in the interval 160 to 245 (DDKVTIDFVG…VKKIQQAELP (86 aa)).

It belongs to the FKBP-type PPIase family. Tig subfamily.

It localises to the cytoplasm. It catalyses the reaction [protein]-peptidylproline (omega=180) = [protein]-peptidylproline (omega=0). In terms of biological role, involved in protein export. Acts as a chaperone by maintaining the newly synthesized protein in an open conformation. Functions as a peptidyl-prolyl cis-trans isomerase. This chain is Trigger factor, found in Francisella tularensis subsp. novicida (strain U112).